A 646-amino-acid chain; its full sequence is Anoctamin-10 (646 aa).

The next 8 membrane-spanning stretches (helical) occupy residues 210-230 (LYFG…LIGI), 241-261 (DKYV…LEVW), 314-334 (IYLV…YVMM), 357-377 (VLLF…NLLY), 404-424 (VLVF…FVMQ), 502-522 (FLLF…AVLV), 557-577 (LAFE…IALS), and 592-612 (ILTV…LAFV).

The protein belongs to the anoctamin family.

The protein localises to the membrane. Functionally, does not exhibit calcium-activated chloride channel (CaCC) activity. Can inhibit the activity of ANO1. This chain is Anoctamin-10 (ano10), found in Danio rerio (Zebrafish).